The chain runs to 433 residues: WD repeat domain phosphoinositide-interacting protein 1 (433 aa).

A Nuclear receptor interaction motif is present at residues 127-132 (LLKTLL). WD repeat units follow at residues 136 to 177 (RNPH…CECT) and 180 to 220 (AHDS…KLYE). The short motif at 221 to 224 (FRRG) is the L/FRRG motif element. WD repeat units lie at residues 226-265 (KRYV…ERSE) and 296-346 (DRAF…GGEC).

This sequence belongs to the WD repeat PROPPIN family.

It localises to the golgi apparatus. Its subcellular location is the trans-Golgi network. The protein resides in the endosome. The protein localises to the cytoplasmic vesicle. It is found in the clathrin-coated vesicle. It localises to the preautophagosomal structure membrane. Its subcellular location is the cytoplasm. The protein resides in the cytoskeleton. Component of the autophagy machinery that controls the major intracellular degradation process by which cytoplasmic materials are packaged into autophagosomes and delivered to lysosomes for degradation. Plays an important role in starvation- and calcium-mediated autophagy, as well as in mitophagy. Functions downstream of the ulk1 and PI3-kinases that produce phosphatidylinositol 3-phosphate (PtdIns3P) on membranes of the endoplasmic reticulum once activated. Binds phosphatidylinositol 3-phosphate (PtdIns3P), and maybe other phosphoinositides including PtdIns3,5P2 and PtdIns5P, and is recruited to phagophore assembly sites at the endoplasmic reticulum membranes. There, it assists wipi2 in the recruitment of atg12-atg5-atg16l1, a complex that directly controls the elongation of the nascent autophagosomal membrane. Together with wdr45/wipi4, promotes atg2 (atg2a or atg2b)-mediated lipid transfer by enhancing atg2-association with phosphatidylinositol 3-monophosphate (PI3P)-containing membranes. In Xenopus laevis (African clawed frog), this protein is WD repeat domain phosphoinositide-interacting protein 1 (wipi1).